A 699-amino-acid polypeptide reads, in one-letter code: Lutropin-choriogonadotropic hormone receptor (699 aa).

An N-terminal signal peptide occupies residues 1 to 26 (MKQRFSALQLLKLLLLLQPPLPRALR). An LRRNT domain is found at 27 to 66 (EALCPEPCNCVPDGALRCPGPTAGLTRLSLAYLPVKVIPS). Residues 27–363 (EALCPEPCNC…EDIMGYDFLR (337 aa)) lie on the Extracellular side of the membrane. 3 LRR repeats span residues 96 to 115 (NLLN…RYIE), 124 to 145 (RLKY…TKVF), and 149 to 171 (SNFI…AFQG). An N-linked (GlcNAc...) asparagine glycan is attached at N99. 2 N-linked (GlcNAc...) asparagine glycosylation sites follow: N174 and N195. LRR repeat units follow at residues 175–196 (ESVT…AFNG), 198–220 (TLTS…AFRG), and 223–244 (GPKT…GLES). N-linked (GlcNAc...) asparagine glycosylation is found at N291, N299, and N313. Y331 carries the sulfotyrosine modification. The helical transmembrane segment at 364–385 (VLIWLINILAIMGNMTVLFVLL) threads the bilayer. Residues 386 to 395 (TSRYKLTVPR) are Cytoplasmic-facing. Residues 396–416 (FLMCNLSFADFCMGLYLLLIA) traverse the membrane as a helical segment. Topologically, residues 417–439 (SVDSQTKGQYYNHAIDWQTGSGC) are extracellular. A disulfide bridge connects residues C439 and C514. Residues 440–462 (STAGFFTVFASELSVYTLTVITL) form a helical membrane-spanning segment. At 463 to 482 (ERWHTITYAIHLDQKLRLRH) the chain is on the cytoplasmic side. The chain crosses the membrane as a helical span at residues 483–505 (AILIMLGGWLFSSLIAMLPLVGV). Residues 506–525 (SNYMKVSICFPMDVETTLSQ) lie on the Extracellular side of the membrane. Residues 526 to 549 (VYILTILILNVVAFFIICACYIKI) traverse the membrane as a helical segment. Topologically, residues 550 to 570 (YFAVRNPELMATNKDTKIAKK) are cytoplasmic. Residues 571-594 (MAILIFTDFTCMAPISFFAISAAF) form a helical membrane-spanning segment. Topologically, residues 595–605 (KVPLITVTNSK) are extracellular. The helical transmembrane segment at 606–627 (VLLVLFYPINSCANPFLYAIFT) threads the bilayer. The Cytoplasmic segment spans residues 628–699 (KTFQRDFFLL…LLDKTRYTEC (72 aa)). S-palmitoyl cysteine attachment occurs at residues C643 and C644.

Belongs to the G-protein coupled receptor 1 family. FSH/LSH/TSH subfamily. Sulfated. Gonadal and thyroid cells.

It is found in the cell membrane. Receptor for lutropin-choriogonadotropic hormone. The activity of this receptor is mediated by G proteins which activate adenylate cyclase. In Homo sapiens (Human), this protein is Lutropin-choriogonadotropic hormone receptor (LHCGR).